Here is a 273-residue protein sequence, read N- to C-terminus: Dermonecrotic toxin LspaSicTox-alphaIA2i (273 aa).

The active site involves His-5. Residues Glu-25 and Asp-27 each contribute to the Mg(2+) site. Residue His-41 is the Nucleophile of the active site. Cystine bridges form between Cys-45/Cys-51 and Cys-47/Cys-190. Asp-85 is a Mg(2+) binding site.

Belongs to the arthropod phospholipase D family. Class II subfamily. Requires Mg(2+) as cofactor. Expressed by the venom gland.

It localises to the secreted. It carries out the reaction an N-(acyl)-sphingosylphosphocholine = an N-(acyl)-sphingosyl-1,3-cyclic phosphate + choline. It catalyses the reaction an N-(acyl)-sphingosylphosphoethanolamine = an N-(acyl)-sphingosyl-1,3-cyclic phosphate + ethanolamine. The catalysed reaction is a 1-acyl-sn-glycero-3-phosphocholine = a 1-acyl-sn-glycero-2,3-cyclic phosphate + choline. The enzyme catalyses a 1-acyl-sn-glycero-3-phosphoethanolamine = a 1-acyl-sn-glycero-2,3-cyclic phosphate + ethanolamine. In terms of biological role, dermonecrotic toxins cleave the phosphodiester linkage between the phosphate and headgroup of certain phospholipids (sphingolipid and lysolipid substrates), forming an alcohol (often choline) and a cyclic phosphate. This toxin acts on sphingomyelin (SM). It may also act on ceramide phosphoethanolamine (CPE), lysophosphatidylcholine (LPC) and lysophosphatidylethanolamine (LPE), but not on lysophosphatidylserine (LPS), and lysophosphatidylglycerol (LPG). It acts by transphosphatidylation, releasing exclusively cyclic phosphate products as second products. Induces dermonecrosis, hemolysis, increased vascular permeability, edema, inflammatory response, and platelet aggregation. This is Dermonecrotic toxin LspaSicTox-alphaIA2i from Loxosceles spadicea (Recluse spider).